Reading from the N-terminus, the 953-residue chain is Vacuolar membrane protease (953 aa).

Over 1 to 16 (MDQTKPPRRNPLAFTP) the chain is Cytoplasmic. A helical membrane pass occupies residues 17–37 (WPVTLITAVVYLAFVIPLLVI). Over 38–382 (HHVVPSAPTS…TFVLFRLHTL (345 aa)) the chain is Vacuolar. Residues N53 and N115 are each glycosylated (N-linked (GlcNAc...) asparagine). 2 residues coordinate Zn(2+): H165 and D177. E211 (proton acceptor) is an active-site residue. The Zn(2+) site is built by E212, E237, and H310. The helical transmembrane segment at 383–403 (FALSVTLLVVAPIVLLLTSII) threads the bilayer. Residues 404–437 (LTKVDKMYLFRTSIRPEGSLEVLPLYGDRGVIRY) are Cytoplasmic-facing. A helical membrane pass occupies residues 438-458 (PFLLGIPTAVTIGLAYLLTKF). The Vacuolar portion of the chain corresponds to 459 to 464 (NPYIVH). The helical transmembrane segment at 465 to 485 (SSQYAVWSMMVSVWIFLAWFV) threads the bilayer. Residues 486–499 (SRVADFARPSAFHR) lie on the Cytoplasmic side of the membrane. A helical transmembrane segment spans residues 500-520 (VYTLTWTFVVMWVLQVIATVY). At 521 to 524 (QDRW) the chain is on the vacuolar side. A helical transmembrane segment spans residues 525–545 (ALGGSYFIFFAYAGTFLATWI). Residues 546-650 (SYLELFALPR…SLPKWLWLLQ (105 aa)) lie on the Cytoplasmic side of the membrane. The segment at 570 to 599 (ASSHSSRRGLSEEDEEDEDEAPTESTSLLG) is disordered. Residues 581–591 (EEDEEDEDEAP) show a composition bias toward acidic residues. A helical transmembrane segment spans residues 651–671 (FLLAAPIVLILVGPIALLLTG). Topologically, residues 672–684 (SLHQTGQDGSSSL) are vacuolar. The chain crosses the membrane as a helical span at residues 685 to 705 (FIYIAIVALTTLLLSPMLPFV). The Cytoplasmic portion of the chain corresponds to 706–711 (HRCTYH). A helical membrane pass occupies residues 712–732 (IPLFMLAVFAGTLIYNLVAFP). Topologically, residues 733–953 (FSDSNRLKLF…VEGRKSFEIA (221 aa)) are vacuolar. An N-linked (GlcNAc...) asparagine glycan is attached at N779.

The protein belongs to the peptidase M28 family. Zn(2+) is required as a cofactor.

Its subcellular location is the vacuole membrane. Functionally, may be involved in vacuolar sorting and osmoregulation. This Emericella nidulans (strain FGSC A4 / ATCC 38163 / CBS 112.46 / NRRL 194 / M139) (Aspergillus nidulans) protein is Vacuolar membrane protease.